A 164-amino-acid polypeptide reads, in one-letter code: MKCKPNQTRTYDPEGFKKRAACLCFRSEREDEVLLVSSSRYPDRWIVPGGGMEPEEEPGGAAVREVYEEAGVKGKLGRLLGVFEQNQDRKHRTYVYVLTVTELLEDWEDSVSIGRKREWFKVEDAIKVLQCHKPVHAEYLEKLKLGGSPTNGNSMAPSSPDSDP.

Substrate-binding positions include R9, 17–19 (KKR), and 38–40 (SSR). One can recognise a Nudix hydrolase domain in the interval 17–144 (KKRAACLCFR…VHAEYLEKLK (128 aa)). Residues G49 and E65 each coordinate Mg(2+). The Nudix box motif lies at 50–71 (GGMEPEEEPGGAAVREVYEEAG). The active-site Proton acceptor is E68. E69 serves as a coordination point for Mg(2+). Substrate-binding positions include 89–91 (RKH), R115, and K133. The tract at residues 144–164 (KLGGSPTNGNSMAPSSPDSDP) is disordered. Polar residues predominate over residues 148–164 (SPTNGNSMAPSSPDSDP).

This sequence belongs to the Nudix hydrolase family. DIPP subfamily. Mg(2+) is required as a cofactor. The cofactor is Mn(2+). In terms of tissue distribution, mainly expressed in testis and, at lower level in brain. According to PubMed:12121577, it is also expressed in pancreas and weakly expressed in thymus, prostate, ovary, lung, small intestine and heart.

It is found in the cytoplasm. It carries out the reaction diphospho-myo-inositol polyphosphate + H2O = myo-inositol polyphosphate + phosphate.. The catalysed reaction is P(1),P(6)-bis(5'-adenosyl) hexaphosphate + H2O = adenosine 5'-pentaphosphate + AMP + 2 H(+). It catalyses the reaction P(1),P(5)-bis(5'-adenosyl) pentaphosphate + H2O = adenosine 5'-tetraphosphate + AMP + 2 H(+). Functionally, cleaves a beta-phosphate from the diphosphate groups in PP-InsP5 (diphosphoinositol pentakisphosphate), suggesting that it may play a role in signal transduction. Also able to catalyze the hydrolysis of dinucleoside oligophosphates, with Ap6A and Ap5A being the preferred substrates. The major reaction products are ADP and p4a from Ap6A and ADP and ATP from Ap5A. Also able to hydrolyze 5-phosphoribose 1-diphosphate. The sequence is that of Diphosphoinositol polyphosphate phosphohydrolase 3-beta from Homo sapiens (Human).